A 155-amino-acid chain; its full sequence is Large ribosomal subunit protein bL17 (155 aa).

This sequence belongs to the bacterial ribosomal protein bL17 family. In terms of assembly, part of the 50S ribosomal subunit. Contacts protein L32.

This is Large ribosomal subunit protein bL17 from Syntrophotalea carbinolica (strain DSM 2380 / NBRC 103641 / GraBd1) (Pelobacter carbinolicus).